Consider the following 214-residue polypeptide: Neurogenin-3 (214 aa).

Polar residues predominate over residues 1–14; sequence MTPQPSGAPTVQVT. A disordered region spans residues 1-98; it reads MTPQPSGAPT…NDRERNRMHN (98 aa). Over residues 15–26 the composition is skewed to basic and acidic residues; the sequence is RETERSFPRASE. 2 stretches are compositionally biased toward basic residues: residues 57-70 and 79-88; these read APRK…GRSR and KQRRSRRKKA. A bHLH domain is found at 83–135; the sequence is SRRKKANDRERNRMHNLNSALDALRGVLPTFPDDAKLTKIETLRFAHNYIWAL.

As to quaternary structure, efficient DNA binding requires dimerization with another bHLH protein. Interacts with ATOH8.

Its subcellular location is the nucleus. Acts as a transcriptional regulator. Together with NKX2-2, initiates transcriptional activation of NEUROD1. Involved in neurogenesis. Also required for the specification of a common precursor of the 4 pancreatic endocrine cell types. This Homo sapiens (Human) protein is Neurogenin-3 (NEUROG3).